We begin with the raw amino-acid sequence, 269 residues long: MNRIHAVILDWAGTTVDFGSFAPTQIFVEAFRQAFDVEITLAEARVPMGLGKWQHIEALGKLPAVDARWQAKFGRSMSAADIDAIYAAFMPLQIAKVVDFSSPIAGVIDTIAALRAEGIKIGSCSGYPRAVMERLVPAAAEHGYRPDHWVATDDLAAGGRPGPWMALQNVIALGIDAVAHCVKVDDAAPGISEGLNAGMWTVGLAVSGNEFGATWDAYQTMSKEDVAVRREHAASKLYAAGAHYVVDSLADLPGVIAHINARLAQGERP.

The active-site Nucleophile is aspartate 10. Mg(2+) is bound by residues aspartate 10 and alanine 12. Residue lysine 52 is the Schiff-base intermediate with substrate of the active site. Mg(2+) is bound at residue aspartate 186.

It belongs to the HAD-like hydrolase superfamily. PhnX family. Homodimer. The cofactor is Mg(2+).

The catalysed reaction is phosphonoacetaldehyde + H2O = acetaldehyde + phosphate + H(+). Involved in phosphonate degradation. The sequence is that of Phosphonoacetaldehyde hydrolase from Salmonella heidelberg (strain SL476).